Here is a 156-residue protein sequence, read N- to C-terminus: Small ribosomal subunit protein uS7 (156 aa).

Belongs to the universal ribosomal protein uS7 family. As to quaternary structure, part of the 30S ribosomal subunit. Contacts proteins S9 and S11.

In terms of biological role, one of the primary rRNA binding proteins, it binds directly to 16S rRNA where it nucleates assembly of the head domain of the 30S subunit. Is located at the subunit interface close to the decoding center, probably blocks exit of the E-site tRNA. This Salinispora arenicola (strain CNS-205) protein is Small ribosomal subunit protein uS7.